A 198-amino-acid polypeptide reads, in one-letter code: tRNA(Phe) 7-((3-amino-3-carboxypropyl)-4-demethylwyosine(37)-N(4))-methyltransferase 1 (198 aa).

This sequence belongs to the TYW3 family.

It catalyses the reaction 4-demethyl-7-[(3S)-3-amino-3-carboxypropyl]wyosine(37) in tRNA(Phe) + S-adenosyl-L-methionine = 7-[(3S)-3-amino-3-carboxypropyl]wyosine(37) in tRNA(Phe) + S-adenosyl-L-homocysteine + H(+). Functionally, S-adenosyl-L-methionine-dependent methyltransferase that acts as a component of the wyosine derivatives biosynthesis pathway. Probably methylates N-4 position of wybutosine-86 to produce wybutosine-72. The protein is tRNA(Phe) 7-((3-amino-3-carboxypropyl)-4-demethylwyosine(37)-N(4))-methyltransferase 1 of Thermococcus kodakarensis (strain ATCC BAA-918 / JCM 12380 / KOD1) (Pyrococcus kodakaraensis (strain KOD1)).